The following is a 185-amino-acid chain: MVSSFRVQQAAREIRAGAVIAYPTEAVWGLGCDPWNEDAVYRLLALKSRPVDKGLILIADNIRQFDFLFEDFPEDWIERMGSTWPGPNTWLVPHQDLLPEWVTGKHDTVALRVTDHPQVRELCALVGPLISTSCNPGGRPAAKTRLRVEQYFHGQLDLVLGGALGGRKNPSVIRNLATGEVVRPG.

Positions Ser4–Gly185 constitute a YrdC-like domain.

The protein belongs to the SUA5 family. TsaC subfamily.

Its subcellular location is the cytoplasm. It catalyses the reaction L-threonine + hydrogencarbonate + ATP = L-threonylcarbamoyladenylate + diphosphate + H2O. Required for the formation of a threonylcarbamoyl group on adenosine at position 37 (t(6)A37) in tRNAs that read codons beginning with adenine. Catalyzes the conversion of L-threonine, HCO(3)(-)/CO(2) and ATP to give threonylcarbamoyl-AMP (TC-AMP) as the acyladenylate intermediate, with the release of diphosphate. This chain is Threonylcarbamoyl-AMP synthase, found in Pseudomonas putida (strain GB-1).